The following is an 82-amino-acid chain: Savignygrin (+) (82 aa).

A signal peptide spans 1-21 (MQANIFVFAFLLLSVAVAAYG). Disulfide bonds link Cys-26/Cys-79, Cys-34/Cys-59, and Cys-53/Cys-75. A Cell attachment site motif is present at residues 35–37 (RGD).

As to expression, expressed in salivary glands.

Its subcellular location is the cytoplasmic vesicle. It localises to the secretory vesicle. The protein localises to the secreted. In terms of biological role, tick salivary platelet aggregation inhibitor that plays an important part in the anti-hemostatic strategy of ticks. Inhibits platelet aggregation induced by ADP (IC(50)=130 nM), collagen, the thrombin receptor-activating peptide, and epinephrine, although platelets are activated and their shape changed. Binding to platelets is similar for resting and activated platelets (Kd=50-70 nM). Acts by specifically binding to platelet membrane glycoprotein IIb-IIIa (ITGA2B/ITGB3) in a divalent metal ion dependent manner. In contrast to many disintegrins which only interacts with the beta-3 subunit, this protein interacts with the two subunits (alpha-IIb and beta-3). Also causes disaggregation of aggregated platelets without influencing the activated spherical shape associated with aggregated platelets and causes a decrease in the number of pseudopodia on the activated platelet surface. Does not show any inhibitory activity for the different serine proteases tested. This Ornithodoros kalahariensis (Tick) protein is Savignygrin (+).